Here is a 305-residue protein sequence, read N- to C-terminus: J domain-containing protein 1 (305 aa).

In terms of domain architecture, J spans 91 to 163 (TPYEVLGLVK…SRRRMYDMYA (73 aa)). A helical transmembrane segment spans residues 212–232 (WGMVVWALCMLAGFQVMAFLI).

The protein belongs to the DnaJ family.

The protein localises to the mitochondrion membrane. In terms of biological role, probable chaperone. This is J domain-containing protein 1 (JID1) from Eremothecium gossypii (strain ATCC 10895 / CBS 109.51 / FGSC 9923 / NRRL Y-1056) (Yeast).